Here is a 203-residue protein sequence, read N- to C-terminus: Glycerol-3-phosphate acyltransferase (203 aa).

A run of 5 helical transmembrane segments spans residues 13 to 33 (TLAC…LILT), 62 to 82 (LAAA…AIAS), 88 to 108 (AGIA…WLSF), 118 to 138 (IGVL…IWLA), and 159 to 179 (IALY…MTAI).

The protein belongs to the PlsY family. Probably interacts with PlsX.

The protein resides in the cell inner membrane. It carries out the reaction an acyl phosphate + sn-glycerol 3-phosphate = a 1-acyl-sn-glycero-3-phosphate + phosphate. Its pathway is lipid metabolism; phospholipid metabolism. Its function is as follows. Catalyzes the transfer of an acyl group from acyl-phosphate (acyl-PO(4)) to glycerol-3-phosphate (G3P) to form lysophosphatidic acid (LPA). This enzyme utilizes acyl-phosphate as fatty acyl donor, but not acyl-CoA or acyl-ACP. In Rhizobium meliloti (strain 1021) (Ensifer meliloti), this protein is Glycerol-3-phosphate acyltransferase.